The following is a 317-amino-acid chain: Glutathione synthetase (317 aa).

Residues 126–311 (KFFATQFTQC…IGDKLMDAIA (186 aa)) form the ATP-grasp domain. Position 152 to 208 (152 to 208 (AAEHRDIILKPLDGMGGSSIFRHREGDPNLSVILETLTQHGSQQIMAQRYLPEIKDG)) interacts with ATP. Mg(2+) contacts are provided by Glu282 and Asn284.

This sequence belongs to the prokaryotic GSH synthase family. Mg(2+) is required as a cofactor. The cofactor is Mn(2+).

It carries out the reaction gamma-L-glutamyl-L-cysteine + glycine + ATP = glutathione + ADP + phosphate + H(+). Its pathway is sulfur metabolism; glutathione biosynthesis; glutathione from L-cysteine and L-glutamate: step 2/2. The sequence is that of Glutathione synthetase from Pseudomonas aeruginosa (strain ATCC 15692 / DSM 22644 / CIP 104116 / JCM 14847 / LMG 12228 / 1C / PRS 101 / PAO1).